Here is a 391-residue protein sequence, read N- to C-terminus: 2,4,6-trihydroxybenzophenone synthase (391 aa).

The active site involves Cys-165.

Belongs to the thiolase-like superfamily. Chalcone/stilbene synthases family. In terms of assembly, homodimer. In terms of tissue distribution, expressed in young fruit pericarp.

It catalyses the reaction benzoyl-CoA + 3 malonyl-CoA + 2 H(+) = 2,4,6-trihydroxybenzophenone + 3 CO2 + 4 CoA. Functionally, type III polyketide synthase involved in the biosynthesis of benzophenones and xanthones. Produces mainly 2,4,6-trihydroxybenzophenone together with minor amounts of tetraketide lactone, triketide lactone and diketide lactone. The preferred substrate is benzoyl-CoA, but can also use acetyl-CoA, phenylacetyl-CoA, hexanoyl-CoA, cinnamoyl-CoA, p-coumaroyl-CoA and salicoyl-CoA. The polypeptide is 2,4,6-trihydroxybenzophenone synthase (BPS) (Garcinia mangostana (Mangosteen)).